The primary structure comprises 538 residues: Bifunctional purine biosynthesis protein PurH (538 aa).

One can recognise an MGS-like domain in the interval 8–158; it reads IPAPDKVKIR…KNHAYVTVVT (151 aa).

It belongs to the PurH family.

It catalyses the reaction (6R)-10-formyltetrahydrofolate + 5-amino-1-(5-phospho-beta-D-ribosyl)imidazole-4-carboxamide = 5-formamido-1-(5-phospho-D-ribosyl)imidazole-4-carboxamide + (6S)-5,6,7,8-tetrahydrofolate. The catalysed reaction is IMP + H2O = 5-formamido-1-(5-phospho-D-ribosyl)imidazole-4-carboxamide. Its pathway is purine metabolism; IMP biosynthesis via de novo pathway; 5-formamido-1-(5-phospho-D-ribosyl)imidazole-4-carboxamide from 5-amino-1-(5-phospho-D-ribosyl)imidazole-4-carboxamide (10-formyl THF route): step 1/1. It functions in the pathway purine metabolism; IMP biosynthesis via de novo pathway; IMP from 5-formamido-1-(5-phospho-D-ribosyl)imidazole-4-carboxamide: step 1/1. The polypeptide is Bifunctional purine biosynthesis protein PurH (Agrobacterium fabrum (strain C58 / ATCC 33970) (Agrobacterium tumefaciens (strain C58))).